Here is a 163-residue protein sequence, read N- to C-terminus: Neurotrophin-3 (163 aa).

Positions 1–3 (IQS) are cleaved as a signal peptide. The propeptide occupies 4-119 (SSMDQGILTE…VLNRTSRRKR (116 aa)). Residues 36–61 (QTARTKDGMQTTVKKTEAEADARASQ) are disordered. Positions 49–61 (KKTEAEADARASQ) are enriched in basic and acidic residues. N-linked (GlcNAc...) asparagine glycosylation occurs at N112.

Belongs to the NGF-beta family.

It localises to the secreted. Functionally, seems to promote the survival of visceral and proprioceptive sensory neurons. The chain is Neurotrophin-3 (NTF3) from Boa constrictor (Boa).